The chain runs to 264 residues: 3-methyl-2-oxobutanoate hydroxymethyltransferase (264 aa).

Aspartate 45 and aspartate 84 together coordinate Mg(2+). Residues 45-46 (DS), aspartate 84, and lysine 112 each bind 3-methyl-2-oxobutanoate. Glutamate 114 is a binding site for Mg(2+). The Proton acceptor role is filled by glutamate 181.

Belongs to the PanB family. As to quaternary structure, homodecamer; pentamer of dimers. Requires Mg(2+) as cofactor.

The protein localises to the cytoplasm. It carries out the reaction 3-methyl-2-oxobutanoate + (6R)-5,10-methylene-5,6,7,8-tetrahydrofolate + H2O = 2-dehydropantoate + (6S)-5,6,7,8-tetrahydrofolate. It participates in cofactor biosynthesis; (R)-pantothenate biosynthesis; (R)-pantoate from 3-methyl-2-oxobutanoate: step 1/2. In terms of biological role, catalyzes the reversible reaction in which hydroxymethyl group from 5,10-methylenetetrahydrofolate is transferred onto alpha-ketoisovalerate to form ketopantoate. The sequence is that of 3-methyl-2-oxobutanoate hydroxymethyltransferase from Vibrio vulnificus (strain YJ016).